A 229-amino-acid chain; its full sequence is MSFNWTQLVPGVGHEYAHVATLGIATVAAVGIGAAARASLGKGEAAVLPASKFSLRGIFELLTEMTSGLADMVIGEHGKHYIPFFASVFFFILFNNLLGMIPGMTPATENMNTTFGFGVLMFLFYNFQGVKENGPVAYLKHFMGPVIFLAPLMFVIEIVSHIVRPFSLGLRLANVMMGDHTVLSVFLDLVPIGVPIPFYVMGLFVCFVQAFVFTLLSMVYVAFAIAHDH.

6 helical membrane passes run 16–36, 81–101, 110–130, 142–162, 175–195, and 196–216; these read YAHV…GAAA, YIPF…LGMI, NMNT…FQGV, FMGP…VSHI, VMMG…IGVP, and IPFY…FTLL.

This sequence belongs to the ATPase A chain family. As to quaternary structure, F-type ATPases have 2 components, CF(1) - the catalytic core - and CF(0) - the membrane proton channel. CF(1) has five subunits: alpha(3), beta(3), gamma(1), delta(1), epsilon(1). CF(0) has three main subunits: a(1), b(2) and c(9-12). The alpha and beta chains form an alternating ring which encloses part of the gamma chain. CF(1) is attached to CF(0) by a central stalk formed by the gamma and epsilon chains, while a peripheral stalk is formed by the delta and b chains.

The protein localises to the cell inner membrane. Key component of the proton channel; it plays a direct role in the translocation of protons across the membrane. The chain is ATP synthase subunit a from Bdellovibrio bacteriovorus (strain ATCC 15356 / DSM 50701 / NCIMB 9529 / HD100).